Here is a 699-residue protein sequence, read N- to C-terminus: Receptor-type tyrosine-protein phosphatase epsilon (699 aa).

An N-terminal signal peptide occupies residues 1 to 22; it reads MEPFCPLLLASFSLSLATAGQG. The span at 20-36 shows a compositional bias: low complexity; that stretch reads GQGNDTTPTESNWTSTT. The interval 20–41 is disordered; the sequence is GQGNDTTPTESNWTSTTAGPPD. Residues N23 and N31 are each glycosylated (N-linked (GlcNAc...) asparagine). Over 23–47 the chain is Extracellular; the sequence is NDTTPTESNWTSTTAGPPDPGTSQP. A helical transmembrane segment spans residues 48-68; it reads LLTWLLLPLLLLLFLLAAYFF. At 69–699 the chain is on the cytoplasmic side; sequence RFRKQRKAVV…DIFSDYANFK (631 aa). 2 consecutive Tyrosine-protein phosphatase domains span residues 134–393 and 425–688; these read FREE…LLEY and LEEE…VQDF. Substrate is bound by residues D302, 334–340, and Q378; that span reads CSAGVGR. C334 (phosphocysteine intermediate) is an active-site residue. C629 serves as the catalytic Phosphocysteine intermediate. At Y695 the chain carries Phosphotyrosine.

It belongs to the protein-tyrosine phosphatase family. Receptor class 4 subfamily. In terms of assembly, monomer. Isoform 2: Homodimer. Can form oligomers. Dimerization is increased by oxidative stress and decreased by EGFR. Isoform 2 interacts with GRB2. A catalytically active cytoplasmic form (p65) is produced by proteolytic cleavage of either isoform 1, isoform 2 or isoform 3. Post-translationally, isoform 1 and isoform 2 are phosphorylated on tyrosine residues by tyrosine kinase Neu. In terms of processing, N-glycosylated. As to expression, isoform 1 is highly expressed in the brain, lung, spleen and testis. Isoform 2 is highly expressed in thymus, spleen and lung. Isoform 1 and isoform 2 are expressed in primary hepatocytes.

The protein resides in the cell membrane. The protein localises to the cytoplasm. The enzyme catalyses O-phospho-L-tyrosyl-[protein] + H2O = L-tyrosyl-[protein] + phosphate. Isoform 1 plays a critical role in signaling transduction pathways and phosphoprotein network topology in red blood cells. May play a role in osteoclast formation and function. Acts as a negative regulator of insulin receptor (IR) signaling and is involved in insulin-induced glucose metabolism mainly through direct dephosphorylation and inactivation of IR in hepatocytes and liver. Its function is as follows. Isoform 2 acts as a negative regulator of insulin receptor (IR) signaling in skeletal muscle. Regulates insulin-induced tyrosine phosphorylation of insulin receptor (IR) and insulin receptor substrate 1 (IRS-1), phosphorylation of protein kinase B and glycogen synthase kinase-3 and insulin induced stimulation of glucose uptake. In terms of biological role, isoform 1 and isoform 2 act as a negative regulator of FceRI-mediated signal transduction leading to cytokine production and degranulation, most likely by acting at the level of SYK to affect downstream events such as phosphorylation of SLP76 and LAT and mobilization of Ca(2+). The polypeptide is Receptor-type tyrosine-protein phosphatase epsilon (Ptpre) (Rattus norvegicus (Rat)).